An 866-amino-acid chain; its full sequence is Coiled-coil domain-containing protein 178 (866 aa).

The interval 1 to 21 (MPENEKEPAQPTTNEDALDTG) is disordered. 6 coiled-coil regions span residues 157–266 (ELKK…DYMA), 292–403 (EVME…DQYC), 439–480 (KDLT…EEEV), 514–539 (KTEE…LKKL), 570–631 (RRQV…LLKK), and 665–705 (EKCI…REHV).

This is Coiled-coil domain-containing protein 178 (Ccdc178) from Mus musculus (Mouse).